Consider the following 481-residue polypeptide: MTSPVENSTSTEKLTLAEKVWRDHVVSKGENGEPDLLYIDLQLLHEVTSPQAFDGLRMTGRKLRHPELHLATEDHNVPTEGIKTGSLLEINDKISRLQVSTLRDNCEEFGVRLHPMGDVRQGIVHTVGPQLGATQPGMTIVCGDSHTSTHGAFGSMAFGIGTSEVEHVMATQTLPLKPFKTMAIEVTGELQPGVSSKDLILAIIAKIGTGGGQGYVLEYRGEAIRKMSMDARMTMCNMSIEAGARAGMIAPDQTTFDYVEGREMAPKGADWDEAVAYWKTLPTDEGATFDKVVEIDGSALTPFITWGTNPGQGLPLGESVPSPEDFTNDNDKAAAEKALQYMDLVPGTPLRDIKIDTVFLGSCTNARIEDLQIAADILKGHKIADGMRMMVVPSSTWIKQEAEALGLDKIFTDAGAEWRTAGCSMCLGMNPDQLKPGERSASTSNRNFEGRQGPGGRTHLVSPAVAAATAIRGTLSSPADI.

[4Fe-4S] cluster-binding residues include Cys363, Cys423, and Cys426. The interval 432-459 (DQLKPGERSASTSNRNFEGRQGPGGRTH) is disordered.

The protein belongs to the aconitase/IPM isomerase family. LeuC type 1 subfamily. In terms of assembly, heterodimer of LeuC and LeuD. It depends on [4Fe-4S] cluster as a cofactor.

The catalysed reaction is (2R,3S)-3-isopropylmalate = (2S)-2-isopropylmalate. It participates in amino-acid biosynthesis; L-leucine biosynthesis; L-leucine from 3-methyl-2-oxobutanoate: step 2/4. Functionally, catalyzes the isomerization between 2-isopropylmalate and 3-isopropylmalate, via the formation of 2-isopropylmaleate. The sequence is that of 3-isopropylmalate dehydratase large subunit from Corynebacterium glutamicum (strain ATCC 13032 / DSM 20300 / JCM 1318 / BCRC 11384 / CCUG 27702 / LMG 3730 / NBRC 12168 / NCIMB 10025 / NRRL B-2784 / 534).